The following is a 101-amino-acid chain: A-type ATP synthase subunit F (101 aa).

The protein belongs to the V-ATPase F subunit family. In terms of assembly, has multiple subunits, A(3), B(3), C, D, E, F, G, I and K(x); there may be a few other subunits as well.

The protein localises to the cell membrane. Its function is as follows. Component of the A-type ATP synthase that produces ATP from ADP in the presence of a proton gradient across the membrane. The protein is A-type ATP synthase subunit F of Methanosarcina mazei (strain ATCC BAA-159 / DSM 3647 / Goe1 / Go1 / JCM 11833 / OCM 88) (Methanosarcina frisia).